The primary structure comprises 409 residues: MVRYVPRFADGQKVKLAWPLAVFRLNHIFWPLDPSTGKWGRYLDKVLAVAMSLVFMQHNDAELRYLRFEASNRNLDAFLTGMPTYLILVEAQFRSLHILLHFEKLQKFLEIFYANIYIDPRKEPEMFRKVDGKMIINRLVSAMYGAVISLYLIAPVFSIINQSKDFLYSMIFPFDSDPLYIFVPLLLTNVWVGIVIDTMMFGETNLLCELIVHLNGSYMLLKRDLQLAIEKILVARDRPHMAKQLKVLITKTLRKNVALNQFGQQLEAQYTVRVFIMFAFAAGLLCALSFKAYTNPMANYIYAIWFGAKTVELLSLGQIGSDLAFTTDSLSTMYYLTHWEQILQYSTNPSENLRLLKLINLAIEMNSKPFYVTGLKYFRVSLQAGLKILQASFSYFTFLTSMQRRQMSN.

Topologically, residues 1-35 (MVRYVPRFADGQKVKLAWPLAVFRLNHIFWPLDPS) are cytoplasmic. Residues 36 to 56 (TGKWGRYLDKVLAVAMSLVFM) traverse the membrane as a helical segment. The Extracellular segment spans residues 57–64 (QHNDAELR). A helical transmembrane segment spans residues 65 to 85 (YLRFEASNRNLDAFLTGMPTY). Over 86-139 (LILVEAQFRSLHILLHFEKLQKFLEIFYANIYIDPRKEPEMFRKVDGKMIINRL) the chain is Cytoplasmic. A helical membrane pass occupies residues 140–160 (VSAMYGAVISLYLIAPVFSII). N-linked (GlcNAc...) asparagine glycosylation is present at asparagine 161. The Extracellular segment spans residues 161–177 (NQSKDFLYSMIFPFDSD). A helical membrane pass occupies residues 178–198 (PLYIFVPLLLTNVWVGIVIDT). Residues 199-273 (MMFGETNLLC…QQLEAQYTVR (75 aa)) lie on the Cytoplasmic side of the membrane. Residues 274 to 294 (VFIMFAFAAGLLCALSFKAYT) form a helical membrane-spanning segment. Topologically, residues 295-302 (NPMANYIY) are extracellular. A helical transmembrane segment spans residues 303 to 323 (AIWFGAKTVELLSLGQIGSDL). Over 324–379 (AFTTDSLSTMYYLTHWEQILQYSTNPSENLRLLKLINLAIEMNSKPFYVTGLKYFR) the chain is Cytoplasmic. A helical membrane pass occupies residues 380–400 (VSLQAGLKILQASFSYFTFLT). The Extracellular segment spans residues 401 to 409 (SMQRRQMSN).

Belongs to the insect chemoreceptor superfamily. Heteromeric odorant receptor channel (TC 1.A.69) family. Or1a subfamily. In terms of assembly, interacts with Orco. Complexes exist early in the endomembrane system in olfactory sensory neurons (OSNs), coupling these complexes to the conserved ciliary trafficking pathway. As to expression, expressed in ac3B olfactory sensory neurons in the antenna.

It localises to the cell membrane. In terms of biological role, odorant receptor which mediates acceptance or avoidance behavior, depending on its substrates. The odorant receptor repertoire encodes a large collection of odor stimuli that vary widely in identity, intensity, and duration. Forms a complex with Orco to form odorant-sensing units, providing sensitive and prolonged odorant signaling and calcium permeability. Involved in the behavioral responses to esters. Involved in the behavioral responses to butanol, pentanol, hexanol, octanol, propyl acetate, and butyl acetate. The protein is Odorant receptor 35a (Or35a) of Drosophila melanogaster (Fruit fly).